Here is a 139-residue protein sequence, read N- to C-terminus: MKIIFVCSGNTCRSPLAESIAKSLLPHDSIASRGLFAVEGQAISKESLELIHKYDLPEPSRAQAFHIDDLDADIILTMTQAHKDLIFSMYGRQSNVFTLNEYVGDTQEIDDPFGGSFDVYEQTYTKIYDLVDKIKFKHE.

Cys-7 acts as the Nucleophile in catalysis. Arg-13 is an active-site residue. Residue Asp-111 is the Proton donor of the active site.

The protein belongs to the low molecular weight phosphotyrosine protein phosphatase family.

It catalyses the reaction O-phospho-L-tyrosyl-[protein] + H2O = L-tyrosyl-[protein] + phosphate. Dephosphorylates the phosphotyrosine-containing proteins. This is Low molecular weight protein-tyrosine-phosphatase PtpB (ptpB) from Staphylococcus epidermidis (strain ATCC 35984 / DSM 28319 / BCRC 17069 / CCUG 31568 / BM 3577 / RP62A).